The primary structure comprises 1373 residues: DNA-directed RNA polymerase subunit beta (1373 aa).

Belongs to the RNA polymerase beta chain family. As to quaternary structure, the RNAP catalytic core consists of 2 alpha, 1 beta, 1 beta' and 1 omega subunit. When a sigma factor is associated with the core the holoenzyme is formed, which can initiate transcription.

It catalyses the reaction RNA(n) + a ribonucleoside 5'-triphosphate = RNA(n+1) + diphosphate. DNA-dependent RNA polymerase catalyzes the transcription of DNA into RNA using the four ribonucleoside triphosphates as substrates. In Rickettsia massiliae, this protein is DNA-directed RNA polymerase subunit beta.